We begin with the raw amino-acid sequence, 350 residues long: Ornithine carbamoyltransferase, mitochondrial (350 aa).

A mitochondrion-targeting transit peptide spans methionine 1 to tyrosine 30. Residues serine 86–arginine 90, arginine 137, and histidine 164 contribute to the carbamoyl phosphate site. Arginine 137 is an L-ornithine binding site. L-ornithine is bound by residues asparagine 195, aspartate 259 to serine 263, histidine 298 to proline 301, and arginine 326. Cysteine 299 is a catalytic residue. Arginine 326 lines the carbamoyl phosphate pocket.

It belongs to the aspartate/ornithine carbamoyltransferase superfamily. OTCase family. As to quaternary structure, homotrimer. In terms of tissue distribution, liver.

It localises to the mitochondrion matrix. The enzyme catalyses carbamoyl phosphate + L-ornithine = L-citrulline + phosphate + H(+). The protein operates within nitrogen metabolism; urea cycle; L-citrulline from L-ornithine and carbamoyl phosphate: step 1/1. OTC is necessary for the tadpoles transition from an ammonotelic, aquatic larva to a ureotelic, terrestrial adult. This chain is Ornithine carbamoyltransferase, mitochondrial, found in Aquarana catesbeiana (American bullfrog).